The following is a 193-amino-acid chain: Probable GTP-binding protein EngB (193 aa).

The EngB-type G domain occupies 22 to 193 (SFPEIVFAGR…LAHFDQYICQ (172 aa)). GTP is bound by residues 30 to 37 (GRSNVGKS), 57 to 61 (GKTRL), 75 to 78 (DLPG), 142 to 145 (TKYD), and 172 to 174 (YSS). 2 residues coordinate Mg(2+): Ser37 and Thr59.

It belongs to the TRAFAC class TrmE-Era-EngA-EngB-Septin-like GTPase superfamily. EngB GTPase family. The cofactor is Mg(2+).

In terms of biological role, necessary for normal cell division and for the maintenance of normal septation. This Pelodictyon phaeoclathratiforme (strain DSM 5477 / BU-1) protein is Probable GTP-binding protein EngB.